The primary structure comprises 124 residues: Ribonuclease P protein component (124 aa).

This sequence belongs to the RnpA family. In terms of assembly, consists of a catalytic RNA component (M1 or rnpB) and a protein subunit.

It carries out the reaction Endonucleolytic cleavage of RNA, removing 5'-extranucleotides from tRNA precursor.. RNaseP catalyzes the removal of the 5'-leader sequence from pre-tRNA to produce the mature 5'-terminus. It can also cleave other RNA substrates such as 4.5S RNA. The protein component plays an auxiliary but essential role in vivo by binding to the 5'-leader sequence and broadening the substrate specificity of the ribozyme. In Mycolicibacterium gilvum (strain PYR-GCK) (Mycobacterium gilvum (strain PYR-GCK)), this protein is Ribonuclease P protein component.